A 971-amino-acid chain; its full sequence is Kinesin-like protein KIN-14C (971 aa).

The 106-residue stretch at 14-119 folds into the Calponin-homology (CH) domain; sequence ANRRAEVIDW…CLLALKDNVA (106 aa). Residues 272 to 357 are a coiled coil; it reads IKALETLVNG…QMETKARQME (86 aa). The Kinesin motor domain maps to 472 to 799; that stretch reads NIRVYCRVRP…LKFAERVSGV (328 aa). 556 to 563 serves as a coordination point for ATP; it reads GQTGSGKT. The stretch at 809-844 forms a coiled coil; it reads EGKDIKELLEQVASLKDTIARKDMEIEQLQLLKSKS. Residues 839-881 are compositionally biased toward polar residues; that stretch reads LLKSKSPNSMTDRNGSNLLRQSTSSTGLSSLPVASQQNQQLSG. The segment at 839-971 is disordered; that stretch reads LLKSKSPNSM…GSLAKPSKRR (133 aa).

The protein belongs to the TRAFAC class myosin-kinesin ATPase superfamily. Kinesin family. KIN-14 subfamily.

The polypeptide is Kinesin-like protein KIN-14C (Oryza sativa subsp. japonica (Rice)).